A 940-amino-acid polypeptide reads, in one-letter code: Isoleucine--tRNA ligase (940 aa).

The short motif at 58 to 68 is the 'HIGH' region element; that stretch reads PYANGNIHIGH. Glu-563 contacts L-isoleucyl-5'-AMP. Residues 604–608 carry the 'KMSKS' region motif; the sequence is KMSKS. Lys-607 is a binding site for ATP. Zn(2+) contacts are provided by Cys-903, Cys-906, Cys-923, and Cys-926.

The protein belongs to the class-I aminoacyl-tRNA synthetase family. IleS type 1 subfamily. Monomer. Requires Zn(2+) as cofactor.

The protein localises to the cytoplasm. It carries out the reaction tRNA(Ile) + L-isoleucine + ATP = L-isoleucyl-tRNA(Ile) + AMP + diphosphate. Catalyzes the attachment of isoleucine to tRNA(Ile). As IleRS can inadvertently accommodate and process structurally similar amino acids such as valine, to avoid such errors it has two additional distinct tRNA(Ile)-dependent editing activities. One activity is designated as 'pretransfer' editing and involves the hydrolysis of activated Val-AMP. The other activity is designated 'posttransfer' editing and involves deacylation of mischarged Val-tRNA(Ile). In Buchnera aphidicola subsp. Acyrthosiphon pisum (strain APS) (Acyrthosiphon pisum symbiotic bacterium), this protein is Isoleucine--tRNA ligase.